The chain runs to 317 residues: Putative ribose-phosphate pyrophosphokinase (317 aa).

The segment at 211-224 (GRDVIVLDDEIAKG) is binding of phosphoribosylpyrophosphate.

It belongs to the ribose-phosphate pyrophosphokinase family.

The catalysed reaction is D-ribose 5-phosphate + ATP = 5-phospho-alpha-D-ribose 1-diphosphate + AMP + H(+). This Streptomyces coelicolor (strain ATCC BAA-471 / A3(2) / M145) protein is Putative ribose-phosphate pyrophosphokinase.